The chain runs to 253 residues: Probable transcriptional regulatory protein A1G_04400 (253 aa).

A disordered region spans residues 1 to 21; it reads MAGHSKFKNIQHRKGAQDKKR.

This sequence belongs to the TACO1 family.

Its subcellular location is the cytoplasm. This Rickettsia rickettsii (strain Sheila Smith) protein is Probable transcriptional regulatory protein A1G_04400.